Here is an 826-residue protein sequence, read N- to C-terminus: DEAD-box ATP-dependent RNA helicase 13 (826 aa).

Basic and acidic residues predominate over residues 1–10 (MVTGDKESSL). Disordered stretches follow at residues 1-62 (MVTG…QLDG) and 76-175 (HLTL…GDDT). Residues 11–22 (MKKRNKRSHKRK) are compositionally biased toward basic residues. Positions 49-58 (SFSTLFSGSG) are enriched in polar residues. Acidic residues predominate over residues 94-128 (EDDDDTNETVDEMIEGEEAEEDGEGRDDEDDEDDE). Positions 125–166 (EDDEETRKKKEKKAKRNKEKKKEKKKKKQKKINEAAKNQDAS) form a coiled coil. The segment covering 133–154 (KKEKKAKRNKEKKKEKKKKKQK) has biased composition (basic residues). The short motif at 190-218 (SAWSSMRLHPLLMKSIYRLDFKEPTKIQK) is the Q motif element. One can recognise a Helicase ATP-binding domain in the interval 222-439 (NVAAYQGKDV…KLKRGSSKSK (218 aa)). An ATP-binding site is contributed by 235 to 242 (AETGSGKT). The DEAD box motif lies at 363–366 (DEAD). The 169-residue stretch at 476-644 (KIEESFIKCE…YMPAVRKRLY (169 aa)) folds into the Helicase C-terminal domain. Coiled coils occupy residues 666–712 (LKKH…TLLS) and 783–810 (KMKG…IGRR). The disordered stretch occupies residues 783–826 (KMKGQSAEKRRDIASLKKKRKEEKIGRRDQRRNQKKQRKLMASS). Composition is skewed to basic and acidic residues over residues 788–797 (SAEKRRDIAS) and 804–814 (EEKIGRRDQRR). Residues 815 to 826 (NQKKQRKLMASS) show a composition bias toward basic residues.

The protein belongs to the DEAD box helicase family. DDX24/MAK5 subfamily.

The catalysed reaction is ATP + H2O = ADP + phosphate + H(+). In Arabidopsis thaliana (Mouse-ear cress), this protein is DEAD-box ATP-dependent RNA helicase 13 (RH13).